Here is a 576-residue protein sequence, read N- to C-terminus: Arginine--tRNA ligase (576 aa).

Residues 126–136 (ANPTGPMHIGH) carry the 'HIGH' region motif.

Belongs to the class-I aminoacyl-tRNA synthetase family. As to quaternary structure, monomer.

Its subcellular location is the cytoplasm. The catalysed reaction is tRNA(Arg) + L-arginine + ATP = L-arginyl-tRNA(Arg) + AMP + diphosphate. This chain is Arginine--tRNA ligase, found in Rickettsia africae (strain ESF-5).